A 672-amino-acid chain; its full sequence is UvrABC system protein B (672 aa).

Positions 26–183 (EGLEDGLAHQ…RRLSELQYVR (158 aa)) constitute a Helicase ATP-binding domain. Residue 39-46 (GVTGSGKT) coordinates ATP. The Beta-hairpin motif lies at 92–115 (YYDYYQPEAYVPSSDTFIEKDASV). Residues 431–597 (QVDDLLSEIN…ALNKKVTDIL (167 aa)) form the Helicase C-terminal domain. The tract at residues 601-623 (DGPVRSRTKGARGQRAAEPHPDY) is disordered. A UVR domain is found at 632-667 (EQQIQRLETQMYQHAQNLEFEQAAALRDEIHILREQ).

This sequence belongs to the UvrB family. Forms a heterotetramer with UvrA during the search for lesions. Interacts with UvrC in an incision complex.

It localises to the cytoplasm. Functionally, the UvrABC repair system catalyzes the recognition and processing of DNA lesions. A damage recognition complex composed of 2 UvrA and 2 UvrB subunits scans DNA for abnormalities. Upon binding of the UvrA(2)B(2) complex to a putative damaged site, the DNA wraps around one UvrB monomer. DNA wrap is dependent on ATP binding by UvrB and probably causes local melting of the DNA helix, facilitating insertion of UvrB beta-hairpin between the DNA strands. Then UvrB probes one DNA strand for the presence of a lesion. If a lesion is found the UvrA subunits dissociate and the UvrB-DNA preincision complex is formed. This complex is subsequently bound by UvrC and the second UvrB is released. If no lesion is found, the DNA wraps around the other UvrB subunit that will check the other stand for damage. The sequence is that of UvrABC system protein B from Edwardsiella ictaluri (strain 93-146).